Here is a 79-residue protein sequence, read N- to C-terminus: Small ribosomal subunit protein bS16 (79 aa).

The protein belongs to the bacterial ribosomal protein bS16 family.

The sequence is that of Small ribosomal subunit protein bS16 from Desulfovibrio desulfuricans (strain ATCC 27774 / DSM 6949 / MB).